Here is a 394-residue protein sequence, read N- to C-terminus: Bone morphogenetic protein 2 (394 aa).

The N-terminal stretch at 1–19 (MVAGTRCLLVLLLPQVLLG) is a signal peptide. A propeptide spans 20–280 (GAAGLIPELG…GHPLHKREKR (261 aa)) (cleaved by PCSK5). Ser86 is modified (phosphoserine). N-linked (GlcNAc...) asparagine glycosylation is found at Asn134, Asn162, and Asn198. The interval 269-291 (GKGHPLHKREKRQAKHKQRKRLK) is disordered. Positions 272–291 (HPLHKREKRQAKHKQRKRLK) are enriched in basic residues. Intrachain disulfides connect Cys294–Cys359, Cys323–Cys391, and Cys327–Cys393. The N-linked (GlcNAc...) asparagine glycan is linked to Asn336.

The protein belongs to the TGF-beta family. As to quaternary structure, homodimer; disulfide-linked. Interacts with SOSTDC1. Interacts with GREM2, RGMA, RGMB and RGMC. Interacts with ASPN. Interacts with MAFP5. Interacts with FBN1 (via N-terminal domain) and FBN2. Interacts with type I receptor BMPR1A. Interacts with type II receptor BMPR2. Interacts with SCUBE3. Interacts with TNFAIP6 (primarily via Link domain); this interaction is inhibited by hyaluronan. Interacts with ERFE. Interacts with BMPR1A/ALK3; the interaction may induce HAMP expression. Forms heterodimers with BMP6 in vitro; the heterodimer then binds to its receptor BMPR1A /ALK3 and may induce HAMP expression. Interacts with TGFBR3.

Its subcellular location is the secreted. In terms of biological role, growth factor of the TGF-beta superfamily that plays essential roles in many developmental processes, including cardiogenesis, neurogenesis, and osteogenesis. Induces cartilage and bone formation. Initiates the canonical BMP signaling cascade by associating with type I receptor BMPR1A and type II receptor BMPR2. Once all three components are bound together in a complex at the cell surface, BMPR2 phosphorylates and activates BMPR1A. In turn, BMPR1A propagates signal by phosphorylating SMAD1/5/8 that travel to the nucleus and act as activators and repressors of transcription of target genes. Also acts to promote expression of HAMP, via the interaction with its receptor BMPR1A/ALK3. Can also signal through non-canonical pathways such as ERK/MAP kinase signaling cascade that regulates osteoblast differentiation. Also stimulates the differentiation of myoblasts into osteoblasts via the EIF2AK3-EIF2A-ATF4 pathway by stimulating EIF2A phosphorylation which leads to increased expression of ATF4 which plays a central role in osteoblast differentiation. Acts as a positive regulator of odontoblast differentiation during mesenchymal tooth germ formation, expression is repressed during the bell stage by MSX1-mediated inhibition of CTNNB1 signaling. This chain is Bone morphogenetic protein 2 (Bmp2), found in Mus musculus (Mouse).